The chain runs to 270 residues: Formamidopyrimidine-DNA glycosylase (270 aa).

Pro-2 acts as the Schiff-base intermediate with DNA in catalysis. The active-site Proton donor is the Glu-3. Lys-58 (proton donor; for beta-elimination activity) is an active-site residue. The DNA site is built by His-91, Arg-110, and Arg-151. The FPG-type zinc-finger motif lies at 236–270 (FVYGRGGMPCKLCGTTLREAKLGQRASVYCPRCQR). Residue Arg-260 is the Proton donor; for delta-elimination activity of the active site.

This sequence belongs to the FPG family. Monomer. Zn(2+) serves as cofactor.

The catalysed reaction is Hydrolysis of DNA containing ring-opened 7-methylguanine residues, releasing 2,6-diamino-4-hydroxy-5-(N-methyl)formamidopyrimidine.. It carries out the reaction 2'-deoxyribonucleotide-(2'-deoxyribose 5'-phosphate)-2'-deoxyribonucleotide-DNA = a 3'-end 2'-deoxyribonucleotide-(2,3-dehydro-2,3-deoxyribose 5'-phosphate)-DNA + a 5'-end 5'-phospho-2'-deoxyribonucleoside-DNA + H(+). Its function is as follows. Involved in base excision repair of DNA damaged by oxidation or by mutagenic agents. Acts as a DNA glycosylase that recognizes and removes damaged bases. Has a preference for oxidized purines, such as 7,8-dihydro-8-oxoguanine (8-oxoG). Has AP (apurinic/apyrimidinic) lyase activity and introduces nicks in the DNA strand. Cleaves the DNA backbone by beta-delta elimination to generate a single-strand break at the site of the removed base with both 3'- and 5'-phosphates. This is Formamidopyrimidine-DNA glycosylase from Pseudomonas putida (strain W619).